A 228-amino-acid chain; its full sequence is uncharacterized protein (228 aa).

This is an uncharacterized protein from Acidianus ambivalens (Desulfurolobus ambivalens).